The chain runs to 261 residues: Hydroxyethylthiazole kinase (261 aa).

Met-40 contacts substrate. Lys-116 and Thr-162 together coordinate ATP. Gly-189 contributes to the substrate binding site.

The protein belongs to the Thz kinase family. It depends on Mg(2+) as a cofactor.

The catalysed reaction is 5-(2-hydroxyethyl)-4-methylthiazole + ATP = 4-methyl-5-(2-phosphooxyethyl)-thiazole + ADP + H(+). It participates in cofactor biosynthesis; thiamine diphosphate biosynthesis; 4-methyl-5-(2-phosphoethyl)-thiazole from 5-(2-hydroxyethyl)-4-methylthiazole: step 1/1. Catalyzes the phosphorylation of the hydroxyl group of 4-methyl-5-beta-hydroxyethylthiazole (THZ). The chain is Hydroxyethylthiazole kinase from Methanosarcina mazei (strain ATCC BAA-159 / DSM 3647 / Goe1 / Go1 / JCM 11833 / OCM 88) (Methanosarcina frisia).